The following is a 170-amino-acid chain: Ubiquitin-conjugating enzyme E2 G1 (170 aa).

Residue Met1 is modified to N-acetylmethionine. The residue at position 2 (Thr2) is an N-acetylthreonine; in Ubiquitin-conjugating enzyme E2 G1, N-terminally processed. In terms of domain architecture, UBC core spans 5–166; that stretch reads QSALLLRRQL…VARCVRKSQE (162 aa). Cys90 functions as the Glycyl thioester intermediate in the catalytic mechanism.

Belongs to the ubiquitin-conjugating enzyme family. Post-translationally, autoubiquitinated.

The catalysed reaction is S-ubiquitinyl-[E1 ubiquitin-activating enzyme]-L-cysteine + [E2 ubiquitin-conjugating enzyme]-L-cysteine = [E1 ubiquitin-activating enzyme]-L-cysteine + S-ubiquitinyl-[E2 ubiquitin-conjugating enzyme]-L-cysteine.. It functions in the pathway protein modification; protein ubiquitination. Functionally, accepts ubiquitin from the E1 complex and catalyzes its covalent attachment to other proteins. In vitro catalyzes 'Lys-48'-, as well as 'Lys-63'-linked polyubiquitination. May be involved in degradation of muscle-specific proteins. Mediates polyubiquitination of CYP3A4. This Macaca fascicularis (Crab-eating macaque) protein is Ubiquitin-conjugating enzyme E2 G1 (UBE2G1).